Consider the following 201-residue polypeptide: Peptide deformylase (201 aa).

The interval 1-34 is disordered; it reads MSLNFAAMARQSERQASTVMVPKGEEQPESPKIH. Residues 23-32 are compositionally biased toward basic and acidic residues; it reads KGEEQPESPK. 2 residues coordinate Fe cation: Cys121 and His163. Residue Glu164 is part of the active site. His167 serves as a coordination point for Fe cation.

This sequence belongs to the polypeptide deformylase family. Fe(2+) serves as cofactor.

It carries out the reaction N-terminal N-formyl-L-methionyl-[peptide] + H2O = N-terminal L-methionyl-[peptide] + formate. Its function is as follows. Removes the formyl group from the N-terminal Met of newly synthesized proteins. Requires at least a dipeptide for an efficient rate of reaction. N-terminal L-methionine is a prerequisite for activity but the enzyme has broad specificity at other positions. The protein is Peptide deformylase of Synechococcus sp. (strain RCC307).